A 115-amino-acid polypeptide reads, in one-letter code: Large ribosomal subunit protein bL19 (115 aa).

Belongs to the bacterial ribosomal protein bL19 family.

Functionally, this protein is located at the 30S-50S ribosomal subunit interface and may play a role in the structure and function of the aminoacyl-tRNA binding site. This Thermotoga maritima (strain ATCC 43589 / DSM 3109 / JCM 10099 / NBRC 100826 / MSB8) protein is Large ribosomal subunit protein bL19 (rplS).